Reading from the N-terminus, the 359-residue chain is Heat-inducible transcription repressor HrcA (359 aa).

The protein belongs to the HrcA family.

Its function is as follows. Negative regulator of class I heat shock genes (grpE-dnaK-dnaJ and groELS operons). Prevents heat-shock induction of these operons. This chain is Heat-inducible transcription repressor HrcA, found in Sinorhizobium fredii (strain NBRC 101917 / NGR234).